The primary structure comprises 173 residues: Alpha-crystallin A chain (173 aa).

Methionine 1 is subject to N-acetylmethionine. The required for complex formation with BFSP1 and BFSP2 stretch occupies residues 1 to 63 (MDIAIQHPWF…RSVLDSGISE (63 aa)). Glutamine 6 carries the post-translational modification Deamidated glutamine; partial. Serine 45 is modified (phosphoserine). Glutamine 50 carries the post-translational modification Deamidated glutamine; partial. The 111-residue stretch at 52 to 162 (VFRSVLDSGI…GHSERAIPVS (111 aa)) folds into the sHSP domain. N6-acetyllysine is present on residues lysine 70 and lysine 99. Histidine 100 is a binding site for Zn(2+). Asparagine 101 carries the post-translational modification Deamidated asparagine; partial. Zn(2+) contacts are provided by glutamate 102 and histidine 107. Position 122 is a phosphoserine (serine 122). Asparagine 123 carries the deamidated asparagine; partial modification. The interval 144 to 173 (PKVPSGVDAGHSERAIPVSREEKPSSAPSS) is disordered. Basic and acidic residues predominate over residues 153–167 (GHSERAIPVSREEKP). Position 154 (histidine 154) interacts with Zn(2+). Residue serine 162 is glycosylated (O-linked (GlcNAc) serine).

Belongs to the small heat shock protein (HSP20) family. In terms of assembly, heteromer composed of three CRYAA and one CRYAB subunits. Inter-subunit bridging via zinc ions enhances stability, which is crucial as there is no protein turn over in the lens. Can also form homodimers and homotetramers (dimers of dimers) which serve as the building blocks of homooligomers. Within homooligomers, the zinc-binding motif is created from residues of 3 different molecules. His-100 and Glu-102 from one molecule are ligands of the zinc ion, and His-107 and His-154 residues from additional molecules complete the site with tetrahedral coordination geometry. Part of a complex required for lens intermediate filament formation composed of BFSP1, BFSP2 and CRYAA. Acetylation at Lys-70 may increase chaperone activity. In terms of processing, undergoes age-dependent proteolytical cleavage at the C-terminus.

It is found in the cytoplasm. Its subcellular location is the nucleus. In terms of biological role, contributes to the transparency and refractive index of the lens. Acts as a chaperone, preventing aggregation of various proteins under a wide range of stress conditions. Required for the correct formation of lens intermediate filaments as part of a complex composed of BFSP1, BFSP2 and CRYAA. The protein is Alpha-crystallin A chain (CRYAA) of Halichoerus grypus (Gray seal).